The chain runs to 149 residues: Ribonuclease pancreatic alpha-type (149 aa).

The N-terminal stretch at Met-1–Gly-25 is a signal peptide. Residues Lys-32 and Arg-35 each contribute to the substrate site. His-37 serves as the catalytic Proton acceptor. Cystine bridges form between Cys-51–Cys-109, Cys-65–Cys-120, Cys-83–Cys-135, and Cys-90–Cys-97. Substrate contacts are provided by residues Lys-66–Thr-70, Lys-91, and Arg-110. His-144 functions as the Proton donor in the catalytic mechanism.

This sequence belongs to the pancreatic ribonuclease family. In terms of assembly, monomer.

It localises to the secreted. It catalyses the reaction an [RNA] containing cytidine + H2O = an [RNA]-3'-cytidine-3'-phosphate + a 5'-hydroxy-ribonucleotide-3'-[RNA].. The enzyme catalyses an [RNA] containing uridine + H2O = an [RNA]-3'-uridine-3'-phosphate + a 5'-hydroxy-ribonucleotide-3'-[RNA].. In terms of biological role, endonuclease that catalyzes the cleavage of RNA on the 3' side of pyrimidine nucleotides. Acts on single-stranded and double-stranded RNA. The protein is Ribonuclease pancreatic alpha-type of Rattus fuscipes (Bush rat).